The following is a 266-amino-acid chain: MELSHRQGTTTLTRTHPNDKEGQQDMNSFRANHSSLDNSKFKYHARLSQSPLGSSLGQGYLETPPLPPTPTCRTSLAMNSHPEDLKKGASRSSSRDARETFREGCVGEEGQDSRSPEQRTVPLSKKDSVIPENIRHKFGSKMVDQLISEDQARQAIGEMFEGQKRPSSWPSRTQSPMQASSIFSDYYDLGYHMRSNLFQGPPQETKSLMKASYTPEVIEKSVRDVEHWHGRKTDDLGRWHRKNAMNMNLQKALEEKYGEKSRSKAK.

Polar residues-rich tracts occupy residues 1–15 and 24–38; these read MELSHRQGTTTLTRT and QDMNSFRANHSSLDN. The interval 1 to 124 is disordered; the sequence is MELSHRQGTT…SPEQRTVPLS (124 aa). The span at 47-63 shows a compositional bias: low complexity; sequence LSQSPLGSSLGQGYLET. The span at 81–102 shows a compositional bias: basic and acidic residues; sequence HPEDLKKGASRSSSRDARETFR.

Only detected in testis, in the spermatids and sperm within the seminiferous tubules (at protein level).

Its subcellular location is the cytoplasmic vesicle. The protein resides in the secretory vesicle. The protein localises to the acrosome. It localises to the cell projection. It is found in the cilium. Its subcellular location is the flagellum. In terms of biological role, seems to be associated with spermiogenesis but is not essential for sperm development and male fertility. This Mus musculus (Mouse) protein is Ciliary microtubule inner protein 4 (Cimip4).